The primary structure comprises 475 residues: NADP-dependent glyceraldehyde-3-phosphate dehydrogenase (475 aa).

Arg103 contributes to the substrate binding site. An NADP(+)-binding site is contributed by Ser151. 154–155 (NY) serves as a coordination point for substrate. NADP(+) is bound by residues Lys177, Thr180, Asp215, and 230–251 (GSTG…MLEL). Active-site residues include Glu250 and Cys284. A substrate-binding site is contributed by 283 to 285 (RCT). Glu377 provides a ligand contact to NADP(+). Substrate is bound at residue Arg437.

The protein belongs to the aldehyde dehydrogenase family. As to quaternary structure, homotetramer.

The enzyme catalyses D-glyceraldehyde 3-phosphate + NADP(+) + H2O = (2R)-3-phosphoglycerate + NADPH + 2 H(+). In Streptococcus mutans serotype c (strain ATCC 700610 / UA159), this protein is NADP-dependent glyceraldehyde-3-phosphate dehydrogenase (gapN).